Consider the following 515-residue polypeptide: Ribose import ATP-binding protein RbsA 1 (515 aa).

2 consecutive ABC transporter domains span residues phenylalanine 8–glutamate 244 and valine 256–histidine 503. Residue glycine 40–serine 47 coordinates ATP.

Belongs to the ABC transporter superfamily. Ribose importer (TC 3.A.1.2.1) family. In terms of assembly, the complex is composed of an ATP-binding protein (RbsA), two transmembrane proteins (RbsC) and a solute-binding protein (RbsB).

Its subcellular location is the cell inner membrane. It catalyses the reaction D-ribose(out) + ATP + H2O = D-ribose(in) + ADP + phosphate + H(+). Part of the ABC transporter complex RbsABC involved in ribose import. Responsible for energy coupling to the transport system. In Mesorhizobium japonicum (strain LMG 29417 / CECT 9101 / MAFF 303099) (Mesorhizobium loti (strain MAFF 303099)), this protein is Ribose import ATP-binding protein RbsA 1.